The chain runs to 404 residues: Mevalonate kinase (404 aa).

Residues Lys12, Ser130, and 135–141 (GAGLGSS) contribute to the ATP site. Mg(2+)-binding residues include Ser141 and Glu184. Asp195 serves as the catalytic Proton acceptor.

The protein belongs to the GHMP kinase family. Mevalonate kinase subfamily. As to quaternary structure, homodimer. Requires Mg(2+) as cofactor.

The protein resides in the cytoplasm. Its subcellular location is the nucleus. It carries out the reaction (R)-mevalonate + ATP = (R)-5-phosphomevalonate + ADP + H(+). It functions in the pathway isoprenoid biosynthesis; isopentenyl diphosphate biosynthesis via mevalonate pathway; isopentenyl diphosphate from (R)-mevalonate: step 1/3. Farnesyl pyrophosphate and geranyl pyrophosphate inhibit mevalonate kinase by binding competitively at the ATP-binding site. Mevalonate kinase; part of the second module of ergosterol biosynthesis pathway that includes the middle steps of the pathway. Erg12 converts mevalonate into 5-phosphomevalonate. The second module is carried out in the vacuole and involves the formation of farnesyl diphosphate, which is also an important intermediate in the biosynthesis of ubiquinone, dolichol, heme and prenylated proteins. Activity by the mevalonate kinase erg12 first converts mevalonate into 5-phosphomevalonate. 5-phosphomevalonate is then further converted to 5-diphosphomevalonate by the phosphomevalonate kinase erg8. The diphosphomevalonate decarboxylase mvd1 then produces isopentenyl diphosphate. The isopentenyl-diphosphate delta-isomerase idi1 then catalyzes the 1,3-allylic rearrangement of the homoallylic substrate isopentenyl (IPP) to its highly electrophilic allylic isomer, dimethylallyl diphosphate (DMAPP). Finally the farnesyl diphosphate synthase fps1 catalyzes the sequential condensation of isopentenyl pyrophosphate with dimethylallyl pyrophosphate, and then with the resultant geranylpyrophosphate to the ultimate product farnesyl pyrophosphate. The polypeptide is Mevalonate kinase (erg12) (Schizosaccharomyces pombe (strain 972 / ATCC 24843) (Fission yeast)).